A 301-amino-acid polypeptide reads, in one-letter code: MTALSRVSGQAPDRVVETYAEGKPYDLFFLDVAGVRLVGRKTEAAYPGPDRDGLPAERLKCALVEARMLLGVVERDQVAEDHVAVFHRPLGEAEKAELFAAAVADPTTDLYYPYAQLGDRVRETEEGGWEVTDESARELDHAEEVLRDHVPDRLAELGFRGGVAYDAACSTGAFLQAVGRRFPGTRTIGQDLSPAMVARARTRLDEAHCGDGIRPAIPEASADLVVCRHLNAFVVGTGQAHDLLAAAASRCREGGLVVLLGHTPVLVSSQWCEMSGLTPLQRSGATPSGHALFQCYVLRKG.

In terms of assembly, monomer.

The catalysed reaction is nocardicin G + S-adenosyl-L-methionine = isonocardicin C + S-methyl-5'-thioadenosine + H(+). The enzyme catalyses nocardicin E + S-adenosyl-L-methionine = isonocardicin A + S-methyl-5'-thioadenosine + H(+). Its pathway is antibiotic biosynthesis. Functionally, involved in the biosynthesis of the beta-lactam antibiotic nocardicin A. In the presence of S-adenosyl-L-methionine (AdoMet), catalyzes the transfer of a 3-amino-3-carboxypropyl group from AdoMet to nocardicin G, forming isonocardicin C. Can also catalyze the transformation of nocardicin E and F to isonocardicin A and B, respectively, but in vivo substrate is probably nocardicin G. The protein is Isonocardicin synthase of Nocardia uniformis subsp. tsuyamanensis.